A 538-amino-acid chain; its full sequence is CTP synthase (538 aa).

The interval M1–M270 is amidoligase domain. S15 provides a ligand contact to CTP. S15 serves as a coordination point for UTP. S16–V21 is an ATP binding site. Residue Y56 participates in L-glutamine binding. D73 contributes to the ATP binding site. 2 residues coordinate Mg(2+): D73 and E143. Residues D150–E152, K190–Q195, and K226 contribute to the CTP site. UTP-binding positions include K190–Q195 and K226. The Glutamine amidotransferase type-1 domain occupies Q295–K537. Residue G357 participates in L-glutamine binding. Catalysis depends on C384, which acts as the Nucleophile; for glutamine hydrolysis. Residues L385–Q388, E408, and R465 each bind L-glutamine. Residues H510 and E512 contribute to the active site.

Belongs to the CTP synthase family. In terms of assembly, homotetramer.

The enzyme catalyses UTP + L-glutamine + ATP + H2O = CTP + L-glutamate + ADP + phosphate + 2 H(+). It catalyses the reaction L-glutamine + H2O = L-glutamate + NH4(+). The catalysed reaction is UTP + NH4(+) + ATP = CTP + ADP + phosphate + 2 H(+). It functions in the pathway pyrimidine metabolism; CTP biosynthesis via de novo pathway; CTP from UDP: step 2/2. Allosterically activated by GTP, when glutamine is the substrate; GTP has no effect on the reaction when ammonia is the substrate. The allosteric effector GTP functions by stabilizing the protein conformation that binds the tetrahedral intermediate(s) formed during glutamine hydrolysis. Inhibited by the product CTP, via allosteric rather than competitive inhibition. Functionally, catalyzes the ATP-dependent amination of UTP to CTP with either L-glutamine or ammonia as the source of nitrogen. Regulates intracellular CTP levels through interactions with the four ribonucleotide triphosphates. This Leptospira interrogans serogroup Icterohaemorrhagiae serovar copenhageni (strain Fiocruz L1-130) protein is CTP synthase.